We begin with the raw amino-acid sequence, 407 residues long: Phosphopentomutase (407 aa).

Asp-10, Asp-306, His-311, Asp-347, His-348, and His-359 together coordinate Mn(2+).

This sequence belongs to the phosphopentomutase family. The cofactor is Mn(2+).

The protein resides in the cytoplasm. It carries out the reaction 2-deoxy-alpha-D-ribose 1-phosphate = 2-deoxy-D-ribose 5-phosphate. It catalyses the reaction alpha-D-ribose 1-phosphate = D-ribose 5-phosphate. Its pathway is carbohydrate degradation; 2-deoxy-D-ribose 1-phosphate degradation; D-glyceraldehyde 3-phosphate and acetaldehyde from 2-deoxy-alpha-D-ribose 1-phosphate: step 1/2. Isomerase that catalyzes the conversion of deoxy-ribose 1-phosphate (dRib-1-P) and ribose 1-phosphate (Rib-1-P) to deoxy-ribose 5-phosphate (dRib-5-P) and ribose 5-phosphate (Rib-5-P), respectively. In Edwardsiella ictaluri (strain 93-146), this protein is Phosphopentomutase.